Here is a 485-residue protein sequence, read N- to C-terminus: Adenosylhomocysteinase (485 aa).

3 residues coordinate substrate: Thr64, Asp139, and Glu205. 206 to 208 (TTT) contacts NAD(+). Substrate is bound by residues Lys235 and Asp239. Residues Asn240, 269 to 274 (GYGDVG), Glu292, Asn327, 348 to 350 (IGH), and Asn397 contribute to the NAD(+) site.

Belongs to the adenosylhomocysteinase family. The cofactor is NAD(+).

It carries out the reaction S-adenosyl-L-homocysteine + H2O = L-homocysteine + adenosine. Its pathway is amino-acid biosynthesis; L-homocysteine biosynthesis; L-homocysteine from S-adenosyl-L-homocysteine: step 1/1. Functionally, adenosylhomocysteine is a competitive inhibitor of S-adenosyl-L-methionine-dependent methyl transferase reactions; therefore adenosylhomocysteinase may play a key role in the control of methylations via regulation of the intracellular concentration of adenosylhomocysteine. This chain is Adenosylhomocysteinase (SAHH), found in Nicotiana sylvestris (Wood tobacco).